The chain runs to 46 residues: Large ribosomal subunit protein bL33B (46 aa).

This sequence belongs to the bacterial ribosomal protein bL33 family.

The chain is Large ribosomal subunit protein bL33B (rpmG2) from Mycoplasmopsis pulmonis (strain UAB CTIP) (Mycoplasma pulmonis).